Consider the following 170-residue polypeptide: Acetyl-CoA decarbonylase/synthase complex subunit epsilon 2 (170 aa).

This sequence belongs to the CdhB family. In terms of assembly, heterotetramer of two alpha and two epsilon subunits. The ACDS complex is made up of alpha, epsilon, beta, gamma and delta subunits with a probable stoichiometry of (alpha(2)epsilon(2))(4)-beta(8)-(gamma(1)delta(1))(8).

The protein operates within one-carbon metabolism; methanogenesis from acetate. Its function is as follows. Part of a complex that catalyzes the reversible cleavage of acetyl-CoA, allowing growth on acetate as sole source of carbon and energy. The alpha-epsilon subcomponent functions as a carbon monoxide dehydrogenase. The precise role of the epsilon subunit is unclear; it may have a stabilizing role within the alpha(2)epsilon(2) component and/or be involved in electron transfer to FAD during a potential FAD-mediated CO oxidation. This chain is Acetyl-CoA decarbonylase/synthase complex subunit epsilon 2 (cdhB2), found in Methanosarcina thermophila.